Here is a 105-residue protein sequence, read N- to C-terminus: MTTVSSDRIRIKLKAYDYRILDKAVAEIVDTARNTGAGVAGPIPLPTNIHKFTVNRSVHVDKKSREQFEMRIHKRLMDILEPTQQTVDALGKLSLPAGVDVEIKL.

It belongs to the universal ribosomal protein uS10 family. As to quaternary structure, part of the 30S ribosomal subunit.

Its function is as follows. Involved in the binding of tRNA to the ribosomes. This is Small ribosomal subunit protein uS10 from Oleidesulfovibrio alaskensis (strain ATCC BAA-1058 / DSM 17464 / G20) (Desulfovibrio alaskensis).